The chain runs to 35 residues: Z-limacoditoxin(1)-Dv4 (35 aa).

A signal peptide spans 1-22 (MKKTFLPIFLVILLASYALGNP). At Gln-23 the chain carries Pyrrolidone carboxylic acid. Pro-32 is modified (proline amide).

This sequence belongs to the limacoditoxin-1 (ACP-like) family. Expressed by the venom secretory cell of the spine. The spine is a cuticular structure containing a single large nucleated venom-secreting cell at its base. It is an independent unit capable of producing, storing and injecting venom. On the back of D.vulnerans caterpillars, spines are grouped together by 50 to 100 to form scoli, of which there are eight in D.vulnerans.

It localises to the secreted. In terms of biological role, potently activates insect GPCR. More precisely, it activates the ACP receptor (ACPR) from the mosquito A.aegypti (EC(50)=3.07 nM) with a potency comparable to that of the endogenous ligand. Has no activity on receptors of the closely related neuropeptides adipokinetic hormone and corazonin. In vivo, does not reveal any observable effects when injected into crickets (A.domesticus). Does not induce increase in intracellular calcium in mouse DRG neurons, suggesting that it does not induce pain. This chain is Z-limacoditoxin(1)-Dv4, found in Doratifera vulnerans (Mottled cup moth).